A 129-amino-acid polypeptide reads, in one-letter code: D-ribose pyranase (129 aa).

The active-site Proton donor is His20. Substrate contacts are provided by residues Asp28, His96, and 118 to 120 (YAN).

It belongs to the RbsD / FucU family. RbsD subfamily. Homodecamer.

Its subcellular location is the cytoplasm. The catalysed reaction is beta-D-ribopyranose = beta-D-ribofuranose. It functions in the pathway carbohydrate metabolism; D-ribose degradation; D-ribose 5-phosphate from beta-D-ribopyranose: step 1/2. In terms of biological role, catalyzes the interconversion of beta-pyran and beta-furan forms of D-ribose. This Streptomyces avermitilis (strain ATCC 31267 / DSM 46492 / JCM 5070 / NBRC 14893 / NCIMB 12804 / NRRL 8165 / MA-4680) protein is D-ribose pyranase.